The following is an 856-amino-acid chain: Leucine--tRNA ligase (856 aa).

A 'HIGH' region motif is present at residues 53–63; sequence PYPSGNLHMGH. The 'KMSKS' region motif lies at 622 to 626; the sequence is KMSKS. ATP is bound at residue lysine 625.

Belongs to the class-I aminoacyl-tRNA synthetase family.

It is found in the cytoplasm. The catalysed reaction is tRNA(Leu) + L-leucine + ATP = L-leucyl-tRNA(Leu) + AMP + diphosphate. The protein is Leucine--tRNA ligase of Prochlorococcus marinus (strain AS9601).